The sequence spans 681 residues: MQKGNIGVTTENIFPIIKKFLYSDHEIFLRELVSNAVDATQKLNTLASISEFKGELGDLTVHVSLGKDTITISDRGIGLTAEEIDKYINQIAFSGANDFLEKYKNDANAIIGHFGLGFYSAFMVSKKVEIITKSYKEGAQAVKWTCDGSPEFTLEEVEKADRGTDIVLYIDDDCKEFLEESRISALLKKYCSFLPVPIAFGKKKEWKDGKQVETAEDNVINDTIPLWTKKPSELSDEDYKKFYRELYPMSDEPLFWIHLNVDYPFHLTGILYFPKVKSNIDLNKNKIQLYCNQVYVTDSVEGIVPDFLTLLHGVLDSPDIPLNVSRSYLQSDSNVKKISTYISKKVSDRLQSIFKNDRAQFEEKWNDLKIFINYGMLTQEDFYDKAQKFALFTDTDGKYYTFEEYQTLIKDNQTDKDKNLIYLYANNKDEQFAYIEAAKNKGYNVLLMDGQLDVAMVSMLEQKLEKSRFTRVDSDVVDNLIVKEDKKSDVLEASKQEALSAAFKSQLPKMEKVEFNVMTQALGENGSPVMITQSEYMRRMKEMANIQAGMSFYGEMPDMFNLVLNSDHKLVKEVLADEEKECSAAIAPIQTELEDVTKRRDALKKKQEGKKDEDIPTVEKDELNDLDKKWDELKQQKDSIFAGYAGKNKVVRQLIDLALLQNNMLKGEALNNFVKRSIELI.

The interval Met1–Arg326 is a; substrate-binding. Residues Ser327 to Asn545 are b. The tract at residues Ile546–Ile681 is c.

This sequence belongs to the heat shock protein 90 family. As to quaternary structure, homodimer.

It is found in the cytoplasm. In terms of biological role, molecular chaperone. Has ATPase activity. The chain is Chaperone protein htpG from Bacteroides fragilis (strain YCH46).